The chain runs to 480 residues: Glutamate--tRNA ligase (480 aa).

The short motif at 21–31 (PSPTGYLHVGG) is the 'HIGH' region element. Zn(2+) is bound by residues Cys-110, Cys-112, Cys-137, and His-139. Positions 248–252 (KLSKR) match the 'KMSKS' region motif. Position 251 (Lys-251) interacts with ATP.

Belongs to the class-I aminoacyl-tRNA synthetase family. Glutamate--tRNA ligase type 1 subfamily. In terms of assembly, monomer. Zn(2+) is required as a cofactor.

Its subcellular location is the cytoplasm. It carries out the reaction tRNA(Glu) + L-glutamate + ATP = L-glutamyl-tRNA(Glu) + AMP + diphosphate. Catalyzes the attachment of glutamate to tRNA(Glu) in a two-step reaction: glutamate is first activated by ATP to form Glu-AMP and then transferred to the acceptor end of tRNA(Glu). The sequence is that of Glutamate--tRNA ligase from Histophilus somni (strain 129Pt) (Haemophilus somnus).